The following is a 146-amino-acid chain: Hemoglobin subunit beta-2 (146 aa).

Positions 2–146 constitute a Globin domain; the sequence is GLTAHEKQLI…IADALGKGYH (145 aa). Heme b is bound by residues His-63 and His-92.

This sequence belongs to the globin family. In terms of assembly, heterotetramer of two alpha chains and two beta chains. Red blood cells.

Involved in oxygen transport from the lung to the various peripheral tissues. In Xenopus borealis (Kenyan clawed frog), this protein is Hemoglobin subunit beta-2 (hbb2).